A 199-amino-acid polypeptide reads, in one-letter code: Recombination protein RecR (199 aa).

The C4-type zinc finger occupies 57–72 (CQACRTFTEETLCPIC). The 96-residue stretch at 81–176 (EVICVVETPA…SVSRIAHGVP (96 aa)) folds into the Toprim domain.

The protein belongs to the RecR family.

In terms of biological role, may play a role in DNA repair. It seems to be involved in an RecBC-independent recombinational process of DNA repair. It may act with RecF and RecO. The protein is Recombination protein RecR of Shewanella woodyi (strain ATCC 51908 / MS32).